Here is a 273-residue protein sequence, read N- to C-terminus: NADPH-dependent 7-cyano-7-deazaguanine reductase (273 aa).

81–83 is a binding site for substrate; that stretch reads VES. 83-84 lines the NADPH pocket; sequence SK. The active-site Thioimide intermediate is Cys-179. The Proton donor role is filled by Asp-186. 218 to 219 contacts substrate; it reads AE. 247–248 is an NADPH binding site; it reads RG.

This sequence belongs to the GTP cyclohydrolase I family. QueF type 2 subfamily. As to quaternary structure, homodimer.

It is found in the cytoplasm. The catalysed reaction is 7-aminomethyl-7-carbaguanine + 2 NADP(+) = 7-cyano-7-deazaguanine + 2 NADPH + 3 H(+). It participates in tRNA modification; tRNA-queuosine biosynthesis. Functionally, catalyzes the NADPH-dependent reduction of 7-cyano-7-deazaguanine (preQ0) to 7-aminomethyl-7-deazaguanine (preQ1). The chain is NADPH-dependent 7-cyano-7-deazaguanine reductase from Rickettsia akari (strain Hartford).